A 171-amino-acid polypeptide reads, in one-letter code: Secretion monitor (171 aa).

A signal peptide spans 1–36 (MIGILNRWRQFGRRYFWPHLLLGMVAASLGLPTSLN).

It belongs to the SecM family.

The protein resides in the cytoplasm. Its subcellular location is the cytosol. It is found in the periplasm. Functionally, regulates secA expression by translational coupling of the secM secA operon. Translational pausing at a specific Pro residue 5 residues before the end of the protein may allow disruption of a mRNA repressor helix that normally suppresses secA translation initiation. In Pectobacterium carotovorum subsp. carotovorum (strain PC1), this protein is Secretion monitor.